Consider the following 102-residue polypeptide: Large ribosomal subunit protein bL21 (102 aa).

The span at 79 to 91 shows a compositional bias: basic residues; that stretch reads RKDSKRKKGHRQP. Residues 79 to 102 are disordered; the sequence is RKDSKRKKGHRQPYTKLTIDKINA.

This sequence belongs to the bacterial ribosomal protein bL21 family. Part of the 50S ribosomal subunit. Contacts protein L20.

Its function is as follows. This protein binds to 23S rRNA in the presence of protein L20. The polypeptide is Large ribosomal subunit protein bL21 (Staphylococcus epidermidis (strain ATCC 35984 / DSM 28319 / BCRC 17069 / CCUG 31568 / BM 3577 / RP62A)).